A 527-amino-acid chain; its full sequence is Putative ABC transporter peptide-binding protein BMEII0859 (527 aa).

The first 23 residues, 1 to 23 (MRLRNFYSALALSAAVFAGPLYA), serve as a signal peptide directing secretion.

The protein belongs to the bacterial solute-binding protein 5 family. The complex is composed of two ATP-binding proteins (BMEII0863 and BMEII0864), two transmembrane proteins (BMEII0860 and BMEII0861) and a solute-binding protein (BMEII0859).

It is found in the periplasm. Its function is as follows. Probably part of an ABC transporter complex that could be involved in peptide import. The polypeptide is Putative ABC transporter peptide-binding protein BMEII0859 (Brucella melitensis biotype 1 (strain ATCC 23456 / CCUG 17765 / NCTC 10094 / 16M)).